Consider the following 100-residue polypeptide: Small ribosomal subunit protein uS14c (100 aa).

Belongs to the universal ribosomal protein uS14 family. Part of the 30S ribosomal subunit.

The protein resides in the plastid. Its subcellular location is the chloroplast. Its function is as follows. Binds 16S rRNA, required for the assembly of 30S particles. The polypeptide is Small ribosomal subunit protein uS14c (Cicer arietinum (Chickpea)).